A 493-amino-acid polypeptide reads, in one-letter code: Catalase A (493 aa).

The disordered stretch occupies residues 1-24 (MKRKLTGLFGAPVSDRENSMTAGP). Residues His53 and Asn126 contribute to the active site. Tyr336 lines the heme pocket.

It belongs to the catalase family. As to quaternary structure, homodimer. Requires heme as cofactor.

The enzyme catalyses 2 H2O2 = O2 + 2 H2O. Functionally, decomposes hydrogen peroxide into water and oxygen; serves to protect cells from the toxic effects of hydrogen peroxide. The polypeptide is Catalase A (katA) (Staphylococcus xylosus).